We begin with the raw amino-acid sequence, 122 residues long: Sarcocystatin-A (122 aa).

The N-terminal stretch at 1-20 (MKYVLILCVITLATVAYAQP) is a signal peptide. Residue Gln21 is modified to Pyrrolidone carboxylic acid. The Secondary area of contact motif lies at 67-71 (QVVSG).

This sequence belongs to the cystatin family.

Selectively inhibits the activity of cysteine proteinase of hemocytes, protecting developing adult tissue in pupae from attack by the proteinase. The protein is Sarcocystatin-A of Sarcophaga peregrina (Flesh fly).